Here is a 326-residue protein sequence, read N- to C-terminus: rRNA 2'-O-methyltransferase fibrillarin (326 aa).

Residues 1-84 (MAFQPGSRGG…GGARGGAKGG (84 aa)) form a disordered region. Gly residues predominate over residues 7 to 83 (SRGGRGGARG…RGGARGGAKG (77 aa)). Asymmetric dimethylarginine occurs at positions 8, 11, 15, 19, 23, 26, 32, 36, 39, 45, 49, 55, 59, 63, 67, 71, 74, and 78. S-adenosyl-L-methionine contacts are provided by residues 180–181 (TS), 199–200 (EF), 224–225 (DA), and 244–247 (DVAQ).

This sequence belongs to the methyltransferase superfamily. Fibrillarin family. In terms of assembly, component of box C/D small nucleolar ribonucleoprotein (snoRNP) particles that contain SNU13, NOP1, SIK1/NOP56 and NOP58, plus a guide RNA. Post-translationally, by homology to other fibrillarins, some or all of the N-terminal domain arginines are modified to asymmetric dimethylarginine (DMA).

Its subcellular location is the nucleus. The protein resides in the nucleolus. The catalysed reaction is L-glutaminyl-[histone H2A] + S-adenosyl-L-methionine = N(5)-methyl-L-glutaminyl-[histone H2A] + S-adenosyl-L-homocysteine + H(+). S-adenosyl-L-methionine-dependent methyltransferase that has the ability to methylate both RNAs and proteins. Involved in pre-rRNA processing. Utilizes the methyl donor S-adenosyl-L-methionine to catalyze the site-specific 2'-hydroxyl methylation of ribose moieties in pre-ribosomal RNA. Site specificity is provided by a guide RNA that base pairs with the substrate. Methylation occurs at a characteristic distance from the sequence involved in base pairing with the guide RNA. Also acts as a protein methyltransferase by mediating methylation of 'Gln-105' of histone H2A (H2AQ105me), a modification that impairs binding of the FACT complex and is specifically present at 35S ribosomal DNA locus. This Eremothecium gossypii (strain ATCC 10895 / CBS 109.51 / FGSC 9923 / NRRL Y-1056) (Yeast) protein is rRNA 2'-O-methyltransferase fibrillarin (NOP1).